A 236-amino-acid polypeptide reads, in one-letter code: Peroxisomal membrane protein PMP27 (236 aa).

The protein belongs to the peroxin-11 family. As to quaternary structure, homooligomer. Interacts with PEX34.

It localises to the peroxisome membrane. Its function is as follows. Involved in peroxisomal proliferation. Promotes peroxisome division and biogenesis. The chain is Peroxisomal membrane protein PMP27 (PEX11) from Saccharomyces cerevisiae (strain ATCC 204508 / S288c) (Baker's yeast).